We begin with the raw amino-acid sequence, 983 residues long: Pro-apoptotic serine protease NMA111 (983 aa).

Positions 1-40 (MSVPTKRRLSFDESTNKRFLNGTHSTENNTSNIEVDEDYG) are disordered. The span at 22–33 (GTHSTENNTSNI) shows a compositional bias: polar residues. Residues 59 to 260 (WQETITKVVN…LPIYRPLRAL (202 aa)) form a serine protease region. Active-site charge relay system residues include His108, Asp139, and Ser222. 2 PDZ domains span residues 287-365 (RRLG…QRGG) and 867-948 (FWSG…MSFD).

Belongs to the peptidase S1C family.

It is found in the nucleus. Functionally, nuclear serine protease which mediates apoptosis. The sequence is that of Pro-apoptotic serine protease NMA111 (NMA111) from Scheffersomyces stipitis (strain ATCC 58785 / CBS 6054 / NBRC 10063 / NRRL Y-11545) (Yeast).